The following is a 788-amino-acid chain: Endonuclease MutS2 (788 aa).

Position 332–339 (332–339 (GPNTGGKT)) interacts with ATP. The Smr domain maps to 713-788 (VDLRGMDAEE…GTGVTVVEIK (76 aa)).

Belongs to the DNA mismatch repair MutS family. MutS2 subfamily. As to quaternary structure, homodimer. Binds to stalled ribosomes, contacting rRNA.

Endonuclease that is involved in the suppression of homologous recombination and thus may have a key role in the control of bacterial genetic diversity. Its function is as follows. Acts as a ribosome collision sensor, splitting the ribosome into its 2 subunits. Detects stalled/collided 70S ribosomes which it binds and splits by an ATP-hydrolysis driven conformational change. Acts upstream of the ribosome quality control system (RQC), a ribosome-associated complex that mediates the extraction of incompletely synthesized nascent chains from stalled ribosomes and their subsequent degradation. Probably generates substrates for RQC. The protein is Endonuclease MutS2 of Clostridium botulinum (strain 657 / Type Ba4).